The chain runs to 138 residues: Small ribosomal subunit protein uS11c (138 aa).

The interval 1-21 (MAKSISKIGSRKNARIGSRKQ) is disordered. The segment covering 9 to 21 (GSRKNARIGSRKQ) has biased composition (basic residues).

The protein belongs to the universal ribosomal protein uS11 family. As to quaternary structure, part of the 30S ribosomal subunit.

It is found in the plastid. The protein resides in the chloroplast. This Cicer arietinum (Chickpea) protein is Small ribosomal subunit protein uS11c.